The following is a 314-amino-acid chain: Small ribosomal subunit protein uS2c (314 aa).

Belongs to the universal ribosomal protein uS2 family.

Its subcellular location is the plastid. The protein localises to the chloroplast. The chain is Small ribosomal subunit protein uS2c (rps2) from Stigeoclonium helveticum (Green alga).